The primary structure comprises 199 residues: MFISFEGTEGVGKTTLIRKIHQHFEEQGKQVVLTREPGGTPLAEQIRSMLLAVNHDENMSHDTELLLIYAARAQHLQQVILPALESNKIVLSDRFTDASFAYQCSGRGLSQDKLQLLNQNFVSRMPEVTFWLDAPIELGMNRARERGALDRFEQEKLSFFTKVREGYETLWKAEPERIKRLDATQSPDQVFEQALQYLA.

ATP is bound at residue 7–14 (GTEGVGKT).

Belongs to the thymidylate kinase family.

It carries out the reaction dTMP + ATP = dTDP + ADP. In terms of biological role, phosphorylation of dTMP to form dTDP in both de novo and salvage pathways of dTTP synthesis. This Acinetobacter baumannii (strain ACICU) protein is Thymidylate kinase.